The sequence spans 37 residues: Mu-agatoxin-Aa1e (37 aa).

4 disulfides stabilise this stretch: Cys-2–Cys-18, Cys-9–Cys-23, Cys-17–Cys-33, and Cys-25–Cys-31. Asn-37 carries the post-translational modification Asparagine amide.

The protein belongs to the neurotoxin 07 (Beta/delta-agtx) family. 03 (aga-4) subfamily. Aga sub-subfamily. As to expression, expressed by the venom gland.

The protein localises to the secreted. Insecticidal neurotoxin that induces an irreversible spastic paralysis when injected into insects. Modifies presynaptic voltage-gated sodium channels (Nav), causing them to open at the normal resting potential of the nerve. This leads to spontaneous release of neurotransmitter and repetitive action potentials in motor neurons. This is Mu-agatoxin-Aa1e from Agelenopsis aperta (North American funnel-web spider).